A 943-amino-acid chain; its full sequence is Isoleucine--tRNA ligase (943 aa).

A 'HIGH' region motif is present at residues 59–69; sequence PYANGQIHLGH. Glu-577 contacts L-isoleucyl-5'-AMP. The 'KMSKS' region motif lies at 618–622; it reads KMSKS. Position 621 (Lys-621) interacts with ATP. 4 residues coordinate Zn(2+): Cys-906, Cys-909, Cys-926, and Cys-929.

It belongs to the class-I aminoacyl-tRNA synthetase family. IleS type 1 subfamily. As to quaternary structure, monomer. It depends on Zn(2+) as a cofactor.

It is found in the cytoplasm. It catalyses the reaction tRNA(Ile) + L-isoleucine + ATP = L-isoleucyl-tRNA(Ile) + AMP + diphosphate. In terms of biological role, catalyzes the attachment of isoleucine to tRNA(Ile). As IleRS can inadvertently accommodate and process structurally similar amino acids such as valine, to avoid such errors it has two additional distinct tRNA(Ile)-dependent editing activities. One activity is designated as 'pretransfer' editing and involves the hydrolysis of activated Val-AMP. The other activity is designated 'posttransfer' editing and involves deacylation of mischarged Val-tRNA(Ile). The polypeptide is Isoleucine--tRNA ligase (Xylella fastidiosa (strain M12)).